The sequence spans 58 residues: Alpha-conotoxin AuIB (58 aa).

The first 16 residues, 1–16 (MFTVFLLVVLATTVVS), serve as a signal peptide directing secretion. Residues 17–39 (FTSDRASDGRKDAASGLIALTMK) constitute a propeptide that is removed on maturation. Cystine bridges form between C41–C47 and C42–C54. Cysteine amide is present on C54.

In terms of tissue distribution, expressed by the venom duct.

The protein resides in the secreted. Functionally, alpha-conotoxins act on postsynaptic membranes, they bind to the nicotinic acetylcholine receptors (nAChR) and thus inhibit them. This toxin blocks mammalian nAChR alpha-3-beta-4/CHRNA3-CHRNB4 subunits. Also exhibits inhibition of D.melanogaster alpha-7/CHRNA7 nAChRs. The chain is Alpha-conotoxin AuIB from Conus aulicus (Princely cone).